The primary structure comprises 677 residues: Methionine--tRNA ligase (677 aa).

The 'HIGH' region signature appears at 15 to 25 (PYANGSIHLGH). Residues cysteine 146, cysteine 149, cysteine 159, and cysteine 162 each contribute to the Zn(2+) site. The 'KMSKS' region signature appears at 333–337 (KMSKS). An ATP-binding site is contributed by lysine 336. The region spanning 575 to 677 (DFAKVDLRVA…AGAKPGHQVK (103 aa)) is the tRNA-binding domain.

It belongs to the class-I aminoacyl-tRNA synthetase family. MetG type 1 subfamily. In terms of assembly, homodimer. Zn(2+) is required as a cofactor.

The protein localises to the cytoplasm. The catalysed reaction is tRNA(Met) + L-methionine + ATP = L-methionyl-tRNA(Met) + AMP + diphosphate. Functionally, is required not only for elongation of protein synthesis but also for the initiation of all mRNA translation through initiator tRNA(fMet) aminoacylation. The chain is Methionine--tRNA ligase from Shigella sonnei (strain Ss046).